We begin with the raw amino-acid sequence, 365 residues long: Aminomethyltransferase (365 aa).

It belongs to the GcvT family. As to quaternary structure, the glycine cleavage system is composed of four proteins: P, T, L and H.

It carries out the reaction N(6)-[(R)-S(8)-aminomethyldihydrolipoyl]-L-lysyl-[protein] + (6S)-5,6,7,8-tetrahydrofolate = N(6)-[(R)-dihydrolipoyl]-L-lysyl-[protein] + (6R)-5,10-methylene-5,6,7,8-tetrahydrofolate + NH4(+). Its function is as follows. The glycine cleavage system catalyzes the degradation of glycine. This Aeromonas hydrophila subsp. hydrophila (strain ATCC 7966 / DSM 30187 / BCRC 13018 / CCUG 14551 / JCM 1027 / KCTC 2358 / NCIMB 9240 / NCTC 8049) protein is Aminomethyltransferase.